Consider the following 97-residue polypeptide: Ferredoxin-like protein YdiT (97 aa).

Belongs to the bacterial-type ferredoxin family. FixX subfamily.

Could be a 3Fe-4S cluster-containing protein. Probably participates in a redox process with YdiQ, YdiR and YdiS. The polypeptide is Ferredoxin-like protein YdiT (ydiT) (Escherichia coli (strain K12)).